The chain runs to 186 residues: Der GTPase-activating protein YihI (186 aa).

Residues 42-77 (KAREDKKKRKHKGLASGSRHSAVEEKANKLQNEIKD) are disordered. Positions 62 to 77 (SAVEEKANKLQNEIKD) are enriched in basic and acidic residues.

It belongs to the YihI family. In terms of assembly, interacts with Der.

A GTPase-activating protein (GAP) that modifies Der/EngA GTPase function. May play a role in ribosome biogenesis. This chain is Der GTPase-activating protein YihI, found in Haemophilus influenzae (strain ATCC 51907 / DSM 11121 / KW20 / Rd).